The chain runs to 184 residues: TATA-box-binding protein (184 aa).

2 tandem repeats follow at residues 9 to 85 (IENI…IDKL) and 100 to 178 (VQNI…KKDL).

It belongs to the TBP family.

General factor that plays a role in the activation of archaeal genes transcribed by RNA polymerase. Binds specifically to the TATA box promoter element which lies close to the position of transcription initiation. The sequence is that of TATA-box-binding protein from Picrophilus torridus (strain ATCC 700027 / DSM 9790 / JCM 10055 / NBRC 100828 / KAW 2/3).